An 840-amino-acid polypeptide reads, in one-letter code: DNA mismatch repair protein MutS (840 aa).

601–608 serves as a coordination point for ATP; it reads GPNMSGKS.

This sequence belongs to the DNA mismatch repair MutS family.

This protein is involved in the repair of mismatches in DNA. It is possible that it carries out the mismatch recognition step. This protein has a weak ATPase activity. The polypeptide is DNA mismatch repair protein MutS (Lactococcus lactis subsp. cremoris (strain MG1363)).